The sequence spans 603 residues: Baeyer-Villiger monooxygenase (603 aa).

FAD is bound by residues Glu94, 102–105, Asp114, Tyr120, and Val164; that span reads TWYW. 112 to 114 serves as a coordination point for NADP(+); that stretch reads HCD. Residues 248-254, 271-272, and 386-387 each bind NADP(+); these read TGATGVQ, RT, and KR.

This sequence belongs to the FAD-binding monooxygenase family. FAD is required as a cofactor.

Functionally, catalyzes a Baeyer-Villiger oxidation reaction, i.e. the insertion of an oxygen atom into a carbon-carbon bond adjacent to a carbonyl, which converts ketones to esters or lactones using NADPH and/or NADH as an electron donor. Thus, can convert bicyclo[3.2.0]hept-2-en-6-one into the oxidative lactone products 2-oxabicyclo[3.3.0]oct-6-en-3-one and 3-oxabicyclo[3.3.0]oct-6-en-2-one. Is also able to catalyze the sulfoxidation of methyl phenyl sulfide (thioanisole). This is Baeyer-Villiger monooxygenase from Streptomyces coelicolor (strain ATCC BAA-471 / A3(2) / M145).